Reading from the N-terminus, the 278-residue chain is ADP-dependent (S)-NAD(P)H-hydrate dehydratase (278 aa).

In terms of domain architecture, YjeF C-terminal spans 4–276 (DDDLVRQVIR…KAIPSWMKKL (273 aa)). Residues Ala39, Gly102, and His152 each contribute to the (6S)-NADPHX site. Gly216 contacts AMP. Asp217 contributes to the (6S)-NADPHX binding site.

The protein belongs to the NnrD/CARKD family. As to quaternary structure, homotetramer. The cofactor is Mg(2+).

The enzyme catalyses (6S)-NADHX + ADP = AMP + phosphate + NADH + H(+). The catalysed reaction is (6S)-NADPHX + ADP = AMP + phosphate + NADPH + H(+). Functionally, catalyzes the dehydration of the S-form of NAD(P)HX at the expense of ADP, which is converted to AMP. Together with NAD(P)HX epimerase, which catalyzes the epimerization of the S- and R-forms, the enzyme allows the repair of both epimers of NAD(P)HX, a damaged form of NAD(P)H that is a result of enzymatic or heat-dependent hydration. This Streptococcus thermophilus protein is ADP-dependent (S)-NAD(P)H-hydrate dehydratase.